A 695-amino-acid polypeptide reads, in one-letter code: Elongation factor G (695 aa).

A tr-type G domain is found at 12-286 (DKLRNIGIMA…AVIDYLPSPL (275 aa)). Residues 21-28 (AHIDAGKT), 85-89 (DTPGH), and 139-142 (NKMD) each bind GTP.

Belongs to the TRAFAC class translation factor GTPase superfamily. Classic translation factor GTPase family. EF-G/EF-2 subfamily.

The protein resides in the cytoplasm. Catalyzes the GTP-dependent ribosomal translocation step during translation elongation. During this step, the ribosome changes from the pre-translocational (PRE) to the post-translocational (POST) state as the newly formed A-site-bound peptidyl-tRNA and P-site-bound deacylated tRNA move to the P and E sites, respectively. Catalyzes the coordinated movement of the two tRNA molecules, the mRNA and conformational changes in the ribosome. The polypeptide is Elongation factor G (Thermotoga sp. (strain RQ2)).